Here is a 628-residue protein sequence, read N- to C-terminus: Leucine-rich repeat and fibronectin type-III domain-containing protein 3 (628 aa).

The first 16 residues, 1 to 16, serve as a signal peptide directing secretion; sequence MAVLPLLLCLLPLAPA. The Extracellular segment spans residues 17 to 540; that stretch reads SSPPQPASPS…APHAPFLGGT (524 aa). The LRRNT domain occupies 19–59; that stretch reads PPQPASPSPCPRRCRCQTQSLPLSVLCPGAGLLFVPPSLDR. 7 LRR repeats span residues 60 to 83, 84 to 105, 108 to 129, 132 to 153, 157 to 178, 181 to 202, and 205 to 226; these read RAAE…ANMT, GLLH…AFSD, ALRA…QLRG, NLRH…ALDD, TLED…ALGR, NVNT…AFSR, and KLAR…PLFS. Positions 249–295 constitute an LRRCT domain; that stretch reads NPLHCNCELVWLRRLAREDDLEACASPPALGGRYFWAVGEEEFVCEP. The Ig-like domain maps to 295–382; that stretch reads PPVVTHRSPP…GEATAAVELT (88 aa). Cysteine 317 and cysteine 366 are oxidised to a cystine. Residues asparagine 348 and asparagine 393 are each glycosylated (N-linked (GlcNAc...) asparagine). The disordered stretch occupies residues 380–433; the sequence is ELTVGPPPPPQLANSTSCDPPRDGEPDALTPPSAASASASAKAAEAGPPTDRGV. The span at 410-428 shows a compositional bias: low complexity; it reads PPSAASASASAKAAEAGPP. The region spanning 427–525 is the Fibronectin type-III domain; it reads PPTDRGVQVT…GCNRFSTEPA (99 aa). The chain crosses the membrane as a helical span at residues 541–561; sequence MIIALGGVIVASVLVFIFVLL. Topologically, residues 562–628 are cytoplasmic; sequence MRYKVHGGQP…WGPSHEPMGP (67 aa). The tract at residues 570-609 is disordered; it reads QPPGKTKASAPVSSVCSQTNGALGPMPAPPAPEPSAPRAH. A compositionally biased stretch (polar residues) spans 580 to 590; that stretch reads PVSSVCSQTNG. Residues 595–604 show a composition bias toward pro residues; it reads MPAPPAPEPS.

It belongs to the LRFN family. As to quaternary structure, can form heteromeric complexes with LRFN1, LRFN2, LRFN4 and LRFN5. Able to form homomeric complexes across cell junctions, between adjacent cells. Does not interact with DLG4. N-glycosylated.

Its subcellular location is the cell membrane. The protein localises to the cell projection. It localises to the axon. It is found in the dendrite. The protein resides in the synapse. Its subcellular location is the presynaptic cell membrane. The protein localises to the postsynaptic cell membrane. Cell adhesion molecule that mediates homophilic cell-cell adhesion in a Ca(2+)-independent manner. Promotes neurite outgrowth in hippocampal neurons. This chain is Leucine-rich repeat and fibronectin type-III domain-containing protein 3 (LRFN3), found in Bos taurus (Bovine).